Reading from the N-terminus, the 149-residue chain is D-aminoacyl-tRNA deacylase (149 aa).

The Gly-cisPro motif, important for rejection of L-amino acids signature appears at 139 to 140 (GP).

It belongs to the DTD family. In terms of assembly, homodimer.

It is found in the cytoplasm. The enzyme catalyses glycyl-tRNA(Ala) + H2O = tRNA(Ala) + glycine + H(+). It carries out the reaction a D-aminoacyl-tRNA + H2O = a tRNA + a D-alpha-amino acid + H(+). Its function is as follows. An aminoacyl-tRNA editing enzyme that deacylates mischarged D-aminoacyl-tRNAs. Also deacylates mischarged glycyl-tRNA(Ala), protecting cells against glycine mischarging by AlaRS. Acts via tRNA-based rather than protein-based catalysis; rejects L-amino acids rather than detecting D-amino acids in the active site. By recycling D-aminoacyl-tRNA to D-amino acids and free tRNA molecules, this enzyme counteracts the toxicity associated with the formation of D-aminoacyl-tRNA entities in vivo and helps enforce protein L-homochirality. The polypeptide is D-aminoacyl-tRNA deacylase (dtd1) (Schizosaccharomyces pombe (strain 972 / ATCC 24843) (Fission yeast)).